A 95-amino-acid chain; its full sequence is Aspartyl/glutamyl-tRNA(Asn/Gln) amidotransferase subunit C (95 aa).

This sequence belongs to the GatC family. Heterotrimer of A, B and C subunits.

The enzyme catalyses L-glutamyl-tRNA(Gln) + L-glutamine + ATP + H2O = L-glutaminyl-tRNA(Gln) + L-glutamate + ADP + phosphate + H(+). It carries out the reaction L-aspartyl-tRNA(Asn) + L-glutamine + ATP + H2O = L-asparaginyl-tRNA(Asn) + L-glutamate + ADP + phosphate + 2 H(+). Allows the formation of correctly charged Asn-tRNA(Asn) or Gln-tRNA(Gln) through the transamidation of misacylated Asp-tRNA(Asn) or Glu-tRNA(Gln) in organisms which lack either or both of asparaginyl-tRNA or glutaminyl-tRNA synthetases. The reaction takes place in the presence of glutamine and ATP through an activated phospho-Asp-tRNA(Asn) or phospho-Glu-tRNA(Gln). The protein is Aspartyl/glutamyl-tRNA(Asn/Gln) amidotransferase subunit C of Pseudomonas entomophila (strain L48).